Reading from the N-terminus, the 423-residue chain is Cytochrome c biogenesis protein Ccs1 (423 aa).

3 consecutive transmembrane segments (helical) span residues 11 to 31 (LKFA…GSII), 70 to 90 (NFWF…CTFF), and 153 to 173 (IAPV…IFAS).

The protein belongs to the Ccs1/CcsB family. As to quaternary structure, may interact with CcsA.

Its subcellular location is the plastid. It localises to the chloroplast thylakoid membrane. Required during biogenesis of c-type cytochromes (cytochrome c6 and cytochrome f) at the step of heme attachment. This chain is Cytochrome c biogenesis protein Ccs1, found in Heterosigma akashiwo (strain NIES-293 / 8280G21-1).